A 713-amino-acid polypeptide reads, in one-letter code: MSEGAAGASPPGAASAAAASAEEGTAAAAAAAAAGGGPDGGGEGAAEPPRELRCSDCIVWNRQQTWLCVVPLFIGFIGLGLSLMLLKWIVVGSVKEYVPTDLVDSKGMGQDPFFLSKPSSFPKAMETTTTTTSTTSPATPSAGGAASSRTPNRISTRLTTITRAPTRFPGHRVPIRASPRSTTARNTAAPPTVLSTTAPFFSSSTPGSRPPMPGAPSTQAMPSWPTAAYATSSYLHDSTPSWTLSPFQDAAAASSSSPSSTSSTTTTPETSTSPKFHTTTYSTERSEHFKPCRDKDLAYCLNDGECFVIETLTGSHKHCRCKEGYQGVRCDQFLPKTDSILSDPTDHLGIEFMESEDVYQRQVLSISCIIFGIVIVGMFCAAFYFKSKKQAKQIQEHLKESQNGKNYSLKASSTKSESLMKSHVHLQNYSKADRHPVTALEKIMESSFSAPQSFPEVTSPDRGSQPIKHHSPGQRSGMLHRNTFRRAPPSPRSRLGGIVGPAYQQLEESRIPDQDTIPCQGIEVRKTISHLPIQLWCVERPLDLKYVSNGLRTQQNASINMQLPSRETNPYFNSLDQKDLVGYLSPRANSVPIIPSMGLEETCMQMPGISDVKSIKWCKNSYSADIVNASMPVSDCLLEEQQEVKILLETVQEQIRILTDARRSEDFELASMETEDSASENTAFLPLSPTAKSEREAQFVLRNEIQRDSVLTK.

The Extracellular portion of the chain corresponds to 1–362 (MSEGAAGASP…MESEDVYQRQ (362 aa)). Disordered regions lie at residues 28 to 48 (AAAAAAAGGGPDGGGEGAAEP), 119 to 220 (SSFP…STQA), and 251 to 282 (AAASSSSPSSTSSTTTTPETSTSPKFHTTTYS). The span at 34 to 44 (AGGGPDGGGEG) shows a compositional bias: gly residues. Over residues 127–148 (TTTTTTSTTSPATPSAGGAASS) the composition is skewed to low complexity. A compositionally biased stretch (polar residues) spans 149–163 (RTPNRISTRLTTITR). Low complexity-rich tracts occupy residues 195 to 207 (STTAPFFSSSTPG) and 254 to 274 (SSSSPSSTSSTTTTPETSTSP). Residues 288–331 (HFKPCRDKDLAYCLNDGECFVIETLTGSHKHCRCKEGYQGVRCD) form the EGF-like domain. Intrachain disulfides connect cysteine 292–cysteine 306, cysteine 300–cysteine 319, and cysteine 321–cysteine 330. A helical membrane pass occupies residues 363–383 (VLSISCIIFGIVIVGMFCAAF). The Cytoplasmic portion of the chain corresponds to 384 to 713 (YFKSKKQAKQ…EIQRDSVLTK (330 aa)). A disordered region spans residues 449 to 496 (SAPQSFPEVTSPDRGSQPIKHHSPGQRSGMLHRNTFRRAPPSPRSRLG).

Belongs to the neuregulin family. As to quaternary structure, interacts with ERBB4. In terms of processing, proteolytic cleavage close to the plasma membrane on the external face leads to the release of the soluble growth factor form. Post-translationally, extensive glycosylation precedes the proteolytic cleavage. As to expression, expressed in sympathetic, motor, and sensory neurons.

The protein resides in the cell membrane. It localises to the secreted. Functionally, direct ligand for the ERBB4 tyrosine kinase receptor. Binding results in ligand-stimulated tyrosine phosphorylation and activation of the receptor. Does not bind to the EGF receptor, ERBB2 or ERBB3 receptors. The sequence is that of Pro-neuregulin-3, membrane-bound isoform (Nrg3) from Mus musculus (Mouse).